A 137-amino-acid chain; its full sequence is Phosphoribosyl-AMP cyclohydrolase (137 aa).

Residue D84 participates in Mg(2+) binding. Position 85 (C85) interacts with Zn(2+). Mg(2+) contacts are provided by D86 and D88. The Zn(2+) site is built by C101 and C108.

The protein belongs to the PRA-CH family. In terms of assembly, homodimer. Mg(2+) serves as cofactor. It depends on Zn(2+) as a cofactor.

Its subcellular location is the cytoplasm. It carries out the reaction 1-(5-phospho-beta-D-ribosyl)-5'-AMP + H2O = 1-(5-phospho-beta-D-ribosyl)-5-[(5-phospho-beta-D-ribosylamino)methylideneamino]imidazole-4-carboxamide. It functions in the pathway amino-acid biosynthesis; L-histidine biosynthesis; L-histidine from 5-phospho-alpha-D-ribose 1-diphosphate: step 3/9. Catalyzes the hydrolysis of the adenine ring of phosphoribosyl-AMP. This chain is Phosphoribosyl-AMP cyclohydrolase, found in Chlorobaculum tepidum (strain ATCC 49652 / DSM 12025 / NBRC 103806 / TLS) (Chlorobium tepidum).